The primary structure comprises 344 residues: 4'-phosphopantetheinyl transferase NpgA (344 aa).

It belongs to the P-Pant transferase superfamily.

The catalysed reaction is apo-[ACP] + CoA = holo-[ACP] + adenosine 3',5'-bisphosphate + H(+). Functionally, transfers the 4'-phosphopantetheine moiety from coenzyme A to a Ser of an acyl-carrier-protein. The enzyme is able to transfer the cofactor to a broad range of enzymes with acyl- or peptidyl-carrier protein domains. Required for primary biological processes such as growth and asexual/sexual development, and activates target enzymes involved in the synthesis of metabolites such as fatty acids, polyketides and nonribosomal peptides, lysine, siderophore, penicillin, sterigmatocystin, shamixantone, dehydroaustinol, and pigments. The chain is 4'-phosphopantetheinyl transferase NpgA (npgA) from Emericella nidulans (strain FGSC A4 / ATCC 38163 / CBS 112.46 / NRRL 194 / M139) (Aspergillus nidulans).